Reading from the N-terminus, the 151-residue chain is Deoxyuridine 5'-triphosphate nucleotidohydrolase (151 aa).

Substrate is bound by residues 70-72 (RSG), Asn-83, 87-89 (LID), and Met-97.

This sequence belongs to the dUTPase family. Mg(2+) serves as cofactor.

It catalyses the reaction dUTP + H2O = dUMP + diphosphate + H(+). Its pathway is pyrimidine metabolism; dUMP biosynthesis; dUMP from dCTP (dUTP route): step 2/2. Functionally, this enzyme is involved in nucleotide metabolism: it produces dUMP, the immediate precursor of thymidine nucleotides and it decreases the intracellular concentration of dUTP so that uracil cannot be incorporated into DNA. This chain is Deoxyuridine 5'-triphosphate nucleotidohydrolase, found in Pseudomonas putida (strain ATCC 700007 / DSM 6899 / JCM 31910 / BCRC 17059 / LMG 24140 / F1).